The sequence spans 375 residues: Protein HrmA (375 aa).

Its function is as follows. Unknown. May serve a regulatory function. The chain is Protein HrmA (hrmA) from Pseudomonas syringae pv. syringae.